A 164-amino-acid polypeptide reads, in one-letter code: Deoxyuridine 5'-triphosphate nucleotidohydrolase (164 aa).

Substrate is bound by residues 66 to 68, asparagine 79, 83 to 85, and lysine 93; these read RSG and TVD.

It belongs to the dUTPase family. The cofactor is Mg(2+).

It catalyses the reaction dUTP + H2O = dUMP + diphosphate + H(+). The protein operates within pyrimidine metabolism; dUMP biosynthesis; dUMP from dCTP (dUTP route): step 2/2. Functionally, this enzyme is involved in nucleotide metabolism: it produces dUMP, the immediate precursor of thymidine nucleotides and it decreases the intracellular concentration of dUTP so that uracil cannot be incorporated into DNA. The sequence is that of Deoxyuridine 5'-triphosphate nucleotidohydrolase from Rhodococcus erythropolis (strain PR4 / NBRC 100887).